Consider the following 125-residue polypeptide: Large ribosomal subunit protein eL8 (125 aa).

This sequence belongs to the eukaryotic ribosomal protein eL8 family. In terms of assembly, part of the 50S ribosomal subunit. Probably part of the RNase P complex.

It is found in the cytoplasm. Its function is as follows. Multifunctional RNA-binding protein that recognizes the K-turn motif in ribosomal RNA, the RNA component of RNase P, box H/ACA, box C/D and box C'/D' sRNAs. In Nanoarchaeum equitans (strain Kin4-M), this protein is Large ribosomal subunit protein eL8.